Here is a 434-residue protein sequence, read N- to C-terminus: 3-phosphoshikimate 1-carboxyvinyltransferase (434 aa).

Residues K15, S16, and R20 each coordinate 3-phosphoshikimate. K15 contacts phosphoenolpyruvate. Residues G96 and R124 each contribute to the phosphoenolpyruvate site. The 3-phosphoshikimate site is built by S169, Q171, S195, D319, and K346. Q171 provides a ligand contact to phosphoenolpyruvate. Catalysis depends on D319, which acts as the Proton acceptor. Phosphoenolpyruvate contacts are provided by R350 and R394.

The protein belongs to the EPSP synthase family. In terms of assembly, monomer.

The protein localises to the cytoplasm. The catalysed reaction is 3-phosphoshikimate + phosphoenolpyruvate = 5-O-(1-carboxyvinyl)-3-phosphoshikimate + phosphate. It participates in metabolic intermediate biosynthesis; chorismate biosynthesis; chorismate from D-erythrose 4-phosphate and phosphoenolpyruvate: step 6/7. Functionally, catalyzes the transfer of the enolpyruvyl moiety of phosphoenolpyruvate (PEP) to the 5-hydroxyl of shikimate-3-phosphate (S3P) to produce enolpyruvyl shikimate-3-phosphate and inorganic phosphate. This Chlorobaculum tepidum (strain ATCC 49652 / DSM 12025 / NBRC 103806 / TLS) (Chlorobium tepidum) protein is 3-phosphoshikimate 1-carboxyvinyltransferase.